The sequence spans 65 residues: Large ribosomal subunit protein bL35 (65 aa).

Belongs to the bacterial ribosomal protein bL35 family.

The chain is Large ribosomal subunit protein bL35 from Karelsulcia muelleri (strain GWSS) (Sulcia muelleri).